We begin with the raw amino-acid sequence, 263 residues long: Endonuclease 8 (263 aa).

Pro-2 acts as the Schiff-base intermediate with DNA in catalysis. Residue Glu-3 is the Proton donor of the active site. Residue Lys-53 is the Proton donor; for beta-elimination activity of the active site. Residues Gln-70, Arg-125, and Asn-169 each coordinate DNA. The segment at 229–263 (KLFHRDGEACERCGGIIEKTTLSSRPFYWCPHCQK) adopts an FPG-type zinc-finger fold. Residue Arg-253 is the Proton donor; for delta-elimination activity of the active site.

Belongs to the FPG family. The cofactor is Zn(2+).

The catalysed reaction is 2'-deoxyribonucleotide-(2'-deoxyribose 5'-phosphate)-2'-deoxyribonucleotide-DNA = a 3'-end 2'-deoxyribonucleotide-(2,3-dehydro-2,3-deoxyribose 5'-phosphate)-DNA + a 5'-end 5'-phospho-2'-deoxyribonucleoside-DNA + H(+). Involved in base excision repair of DNA damaged by oxidation or by mutagenic agents. Acts as a DNA glycosylase that recognizes and removes damaged bases. Has a preference for oxidized pyrimidines, such as thymine glycol, 5,6-dihydrouracil and 5,6-dihydrothymine. Has AP (apurinic/apyrimidinic) lyase activity and introduces nicks in the DNA strand. Cleaves the DNA backbone by beta-delta elimination to generate a single-strand break at the site of the removed base with both 3'- and 5'-phosphates. The protein is Endonuclease 8 of Salmonella typhimurium (strain SL1344).